We begin with the raw amino-acid sequence, 312 residues long: uncharacterized protein (312 aa).

The protein belongs to the mimivirus R69 family.

This is an uncharacterized protein from Acanthamoeba polyphaga mimivirus (APMV).